A 561-amino-acid chain; its full sequence is Oligo-1,6-glucosidase 1 (561 aa).

Positions 20, 22, 24, 26, and 28 each coordinate Ca(2+). Asp199 serves as the catalytic Nucleophile. The Proton donor role is filled by Glu255.

It belongs to the glycosyl hydrolase 13 family.

It is found in the cytoplasm. The enzyme catalyses Hydrolysis of (1-&gt;6)-alpha-D-glucosidic linkages in some oligosaccharides produced from starch and glycogen by alpha-amylase, and in isomaltose.. Hydrolyzes various disaccharides such as sucrose, maltose, and isomaltose with different efficiencies. Also hydrolyzes longer maltodextrins from maltotriose up to maltohexaose, but not maltoheptaose, palatinose, isomaltotriose, or isomaltotetraose. This Bacillus subtilis (strain 168) protein is Oligo-1,6-glucosidase 1 (malL).